The sequence spans 263 residues: Glutamate 5-kinase (263 aa).

Lysine 15 provides a ligand contact to ATP. Positions 55, 142, and 154 each coordinate substrate. ATP-binding positions include 174 to 175 (SD) and 216 to 222 (TGGIETK).

This sequence belongs to the glutamate 5-kinase family.

The protein localises to the cytoplasm. It catalyses the reaction L-glutamate + ATP = L-glutamyl 5-phosphate + ADP. It functions in the pathway amino-acid biosynthesis; L-proline biosynthesis; L-glutamate 5-semialdehyde from L-glutamate: step 1/2. Functionally, catalyzes the transfer of a phosphate group to glutamate to form L-glutamate 5-phosphate. The chain is Glutamate 5-kinase from Alkaliphilus oremlandii (strain OhILAs) (Clostridium oremlandii (strain OhILAs)).